An 867-amino-acid polypeptide reads, in one-letter code: Inactive tyrosine-protein kinase kin-32 (867 aa).

Residues 3 to 327 (GLARVFLIGG…GYQMLYNQRD (325 aa)) form the FERM domain. The 265-residue stretch at 367-631 (ITLKELIGGG…IIEDVRQQII (265 aa)) folds into the Protein kinase domain. Residues 373-381 (IGGGQFGNV) and Lys-400 contribute to the ATP site. A coiled-coil region spans residues 662 to 691 (TLYRTMEDQKRQAEEDAKWLEQEDDEDEDD). Residues 674-729 (AEEDAKWLEQEDDEDEDDQDIDQIPSTSHSSVENIRTSNGYLHHTPTSTRSLRFED) form a disordered region. Residues 683–694 (QEDDEDEDDQDI) are compositionally biased toward acidic residues. A compositionally biased stretch (polar residues) spans 698-724 (PSTSHSSVENIRTSNGYLHHTPTSTRS).

The protein belongs to the protein kinase superfamily. Tyr protein kinase family. FAK subfamily. Expressed in body wall muscles and some neurons in the head.

Functionally, has apparently no tyrosine kinase activity in vitro when expressed in mammalian cells. This Caenorhabditis elegans protein is Inactive tyrosine-protein kinase kin-32.